The primary structure comprises 266 residues: Shikimate dehydrogenase (NADP(+)) (266 aa).

Residues 14–16 (SLS) and Thr-61 each bind shikimate. Lys-65 (proton acceptor) is an active-site residue. Residues Asn-85 and Asp-100 each coordinate shikimate. Residues 124 to 128 (GAGGA) and Ala-210 contribute to the NADP(+) site. Tyr-212 provides a ligand contact to shikimate. Gly-233 contacts NADP(+).

Belongs to the shikimate dehydrogenase family. In terms of assembly, homodimer.

The catalysed reaction is shikimate + NADP(+) = 3-dehydroshikimate + NADPH + H(+). Its pathway is metabolic intermediate biosynthesis; chorismate biosynthesis; chorismate from D-erythrose 4-phosphate and phosphoenolpyruvate: step 4/7. Involved in the biosynthesis of the chorismate, which leads to the biosynthesis of aromatic amino acids. Catalyzes the reversible NADPH linked reduction of 3-dehydroshikimate (DHSA) to yield shikimate (SA). The chain is Shikimate dehydrogenase (NADP(+)) from Halobacterium salinarum (strain ATCC 29341 / DSM 671 / R1).